Consider the following 561-residue polypeptide: Putative transport protein YbjL (561 aa).

5 consecutive transmembrane segments (helical) span residues 8-28 (LLNG…LCLG), 32-52 (LGSV…LLGQ), 66-86 (FMLF…SIFF), 94-114 (MLAL…GKLF), and 158-178 (NLSL…IVGA). 2 RCK C-terminal domains span residues 200–288 (RGLD…SFRN) and 292–373 (VFDR…RIGF). Transmembrane regions (helical) follow at residues 383-403 (LLAF…TFQF), 406-426 (FSFG…LGFL), 447-467 (FGLM…INNG), 475-495 (MLIA…LFGA), and 537-557 (GTYA…VIIW).

Belongs to the AAE transporter (TC 2.A.81) family. YbjL subfamily.

It localises to the cell membrane. The chain is Putative transport protein YbjL from Salmonella choleraesuis (strain SC-B67).